The following is a 747-amino-acid chain: Photosystem I P700 chlorophyll a apoprotein A2 (747 aa).

8 helical membrane passes run L46–A69, L135–Q158, L175–I199, I273–Y291, L341–G364, S380–V406, A428–H450, and F530–I548. Residues C572 and C581 each contribute to the [4Fe-4S] cluster site. 2 helical membrane passes run A588–W609 and L656–I678. The divinyl chlorophyll a site is built by H667, M675, and Y683. W684 is a binding site for phylloquinone. The helical transmembrane segment at L720–A740 threads the bilayer.

The protein belongs to the PsaA/PsaB family. In terms of assembly, the PsaA/B heterodimer binds the P700 divinyl chlorophyll special pair and subsequent electron acceptors. PSI consists of a core antenna complex that captures photons, and an electron transfer chain that converts photonic excitation into a charge separation. The cyanobacterial PSI reaction center is composed of one copy each of PsaA,B,C,D,E,F,I,J,K,L,M and X, and forms trimeric complexes. Requires PSI electron transfer chain: 5 divinyl chlorophyll a, 1 divinyl chlorophyll a', 2 phylloquinones and 3 4Fe-4S clusters. PSI core antenna: 90 divinyl chlorophyll a, 22 carotenoids, 3 phospholipids and 1 galactolipid. P700 is a divinyl chlorophyll a/divinyl chlorophyll a' dimer, A0 is one or more divinyl chlorophyll a, A1 is one or both phylloquinones and FX is a shared 4Fe-4S iron-sulfur center. as cofactor.

It is found in the cellular thylakoid membrane. The enzyme catalyses reduced [plastocyanin] + hnu + oxidized [2Fe-2S]-[ferredoxin] = oxidized [plastocyanin] + reduced [2Fe-2S]-[ferredoxin]. Its function is as follows. PsaA and PsaB bind P700, the primary electron donor of photosystem I (PSI), as well as the electron acceptors A0, A1 and FX. PSI is a plastocyanin/cytochrome c6-ferredoxin oxidoreductase, converting photonic excitation into a charge separation, which transfers an electron from the donor P700 chlorophyll pair to the spectroscopically characterized acceptors A0, A1, FX, FA and FB in turn. Oxidized P700 is reduced on the lumenal side of the thylakoid membrane by plastocyanin or cytochrome c6. This chain is Photosystem I P700 chlorophyll a apoprotein A2, found in Prochlorococcus marinus (strain SARG / CCMP1375 / SS120).